Reading from the N-terminus, the 719-residue chain is Protein STRUBBELIG-RECEPTOR FAMILY 6 (719 aa).

The first 29 residues, 1–29 (MRENWAVVALFTLCIVGFELRFIHGATDA), serve as a signal peptide directing secretion. The Extracellular segment spans residues 30-293 (SDTSALNTLF…SKKSGIGAGA (264 aa)). 6 LRR repeats span residues 97 to 118 (SLTE…QFPP), 119 to 140 (NLQR…SLSQ), 143 to 164 (PLKY…DFSK), 167 to 190 (SLTT…SSLT), 191 to 213 (SLKS…AGLP), and 214 to 234 (LETL…SLKG). Residues 242 to 287 (NSFNTGPAPPPPPGTPPIRGSPSRKSGGRESRSSDESTRNGDSKKS) are disordered. A compositionally biased stretch (pro residues) spans 248–257 (PAPPPPPGTP). Over residues 268 to 286 (GGRESRSSDESTRNGDSKK) the composition is skewed to basic and acidic residues. The helical transmembrane segment at 294 to 314 (IAGIIISLLVVTALLVAFFLF) threads the bilayer. The Cytoplasmic portion of the chain corresponds to 315–719 (RRKKSKRSSP…GSADTTSDYM (405 aa)). Disordered regions lie at residues 322–355 (SSPM…SSVE) and 364–383 (SINL…DEDS). Over residues 332–354 (NQPFTLASNDFHENNSIQSSSSV) the composition is skewed to polar residues. Ser377 carries the phosphoserine modification. The 275-residue stretch at 416–690 (FSVDNLLGEG…SEVVQALVVL (275 aa)) folds into the Protein kinase domain. ATP-binding positions include 422–430 (LGEGTFGRV) and Lys444. Residues 700-719 (TVGVDPSQRAGSADTTSDYM) are disordered. Positions 708–719 (RAGSADTTSDYM) are enriched in polar residues.

Belongs to the protein kinase superfamily. Ser/Thr protein kinase family. Expressed in seedlings, roots, stems, leaves, flowers and siliques.

The protein resides in the membrane. This chain is Protein STRUBBELIG-RECEPTOR FAMILY 6 (SRF6), found in Arabidopsis thaliana (Mouse-ear cress).